The primary structure comprises 398 residues: Putative L-rhamnonate dehydratase (398 aa).

Substrate contacts are provided by H29 and R55. Mg(2+) contacts are provided by D221, E247, and E274. The active-site Proton acceptor is H324. E344 is a substrate binding site.

This sequence belongs to the mandelate racemase/muconate lactonizing enzyme family. RhamD subfamily. Requires Mg(2+) as cofactor.

It carries out the reaction L-rhamnonate = 2-dehydro-3-deoxy-L-rhamnonate + H2O. Functionally, catalyzes the dehydration of L-rhamnonate to 2-keto-3-deoxy-L-rhamnonate (KDR). In Caldivirga maquilingensis (strain ATCC 700844 / DSM 13496 / JCM 10307 / IC-167), this protein is Putative L-rhamnonate dehydratase.